A 259-amino-acid polypeptide reads, in one-letter code: Deoxyribose-phosphate aldolase (259 aa).

D102 functions as the Proton donor/acceptor in the catalytic mechanism. The Schiff-base intermediate with acetaldehyde role is filled by K167. K201 functions as the Proton donor/acceptor in the catalytic mechanism.

This sequence belongs to the DeoC/FbaB aldolase family. DeoC type 2 subfamily.

The protein localises to the cytoplasm. The enzyme catalyses 2-deoxy-D-ribose 5-phosphate = D-glyceraldehyde 3-phosphate + acetaldehyde. It participates in carbohydrate degradation; 2-deoxy-D-ribose 1-phosphate degradation; D-glyceraldehyde 3-phosphate and acetaldehyde from 2-deoxy-alpha-D-ribose 1-phosphate: step 2/2. Its function is as follows. Catalyzes a reversible aldol reaction between acetaldehyde and D-glyceraldehyde 3-phosphate to generate 2-deoxy-D-ribose 5-phosphate. This Erwinia tasmaniensis (strain DSM 17950 / CFBP 7177 / CIP 109463 / NCPPB 4357 / Et1/99) protein is Deoxyribose-phosphate aldolase.